We begin with the raw amino-acid sequence, 108 residues long: Ig kappa chain V-V region HP 124E1 (108 aa).

The interval 1 to 23 is framework-1; that stretch reads DIQMTQTTSSLSASLGDRVTISC. A disulfide bond links Cys-23 and Cys-88. The complementarity-determining-1 stretch occupies residues 24 to 34; that stretch reads RASQDINNYLN. The framework-2 stretch occupies residues 35–49; the sequence is WYQQKPDGTVKLLIY. A complementarity-determining-2 region spans residues 50-56; the sequence is YTSRLHS. The tract at residues 57–88 is framework-3; the sequence is GVPSRFSGSGSGTDYSLTISNLEQEDIATYFC. Positions 89–97 are complementarity-determining-3; that stretch reads QQGKTLPRT. The segment at 98 to 108 is framework-4; sequence FGGGTKLEIKR.

This is Ig kappa chain V-V region HP 124E1 from Mus musculus (Mouse).